Reading from the N-terminus, the 373-residue chain is Cobalt-precorrin-5B C(1)-methyltransferase (373 aa).

This sequence belongs to the CbiD family.

It carries out the reaction Co-precorrin-5B + S-adenosyl-L-methionine = Co-precorrin-6A + S-adenosyl-L-homocysteine. It functions in the pathway cofactor biosynthesis; adenosylcobalamin biosynthesis; cob(II)yrinate a,c-diamide from sirohydrochlorin (anaerobic route): step 6/10. Catalyzes the methylation of C-1 in cobalt-precorrin-5B to form cobalt-precorrin-6A. In Listeria monocytogenes serotype 4a (strain HCC23), this protein is Cobalt-precorrin-5B C(1)-methyltransferase.